A 155-amino-acid chain; its full sequence is UPF0225 protein ECA2332 (155 aa).

Belongs to the UPF0225 family.

The protein is UPF0225 protein ECA2332 of Pectobacterium atrosepticum (strain SCRI 1043 / ATCC BAA-672) (Erwinia carotovora subsp. atroseptica).